The primary structure comprises 176 residues: Isopentenyl-diphosphate Delta-isomerase (176 aa).

Mn(2+) contacts are provided by H22 and H28. Positions 26–160 (LRHKAVSVFV…PERYTPWLRI (135 aa)) constitute a Nudix hydrolase domain. C62 is an active-site residue. H64 lines the Mn(2+) pocket. E82 lines the Mg(2+) pocket. Residues E108 and E110 each coordinate Mn(2+). Residue E110 is part of the active site.

The protein belongs to the IPP isomerase type 1 family. The cofactor is Mg(2+). Requires Mn(2+) as cofactor.

The protein resides in the cytoplasm. The catalysed reaction is isopentenyl diphosphate = dimethylallyl diphosphate. The protein operates within isoprenoid biosynthesis; dimethylallyl diphosphate biosynthesis; dimethylallyl diphosphate from isopentenyl diphosphate: step 1/1. It functions in the pathway porphyrin-containing compound metabolism; chlorophyll biosynthesis. Catalyzes the 1,3-allylic rearrangement of the homoallylic substrate isopentenyl (IPP) to its highly electrophilic allylic isomer, dimethylallyl diphosphate (DMAPP). This is Isopentenyl-diphosphate Delta-isomerase from Dinoroseobacter shibae (strain DSM 16493 / NCIMB 14021 / DFL 12).